The sequence spans 590 residues: Vesicular glutamate transporter 3 (590 aa).

Over 1-76 (MPLGGFAGLK…CGCFGLPKRY (76 aa)) the chain is Cytoplasmic. The helical transmembrane segment at 77–97 (IIAMLSGLGFCISFGIRCNLG) threads the bilayer. The Vesicular portion of the chain corresponds to 98–130 (VAIVEMVNNNTVYINGTAVMQPAQFNWDPETVG). Asparagine 106 and asparagine 112 each carry an N-linked (GlcNAc...) asparagine glycan. The helical transmembrane segment at 131–151 (LIHGSFFWGYIVTQIPGGFIS) threads the bilayer. Over 152–153 (NK) the chain is Cytoplasmic. The chain crosses the membrane as a helical span at residues 154–174 (LAANRVFGAAIFLTSVLNMFI). At 175–182 (PSAARVHY) the chain is on the vesicular side. A helical transmembrane segment spans residues 183–203 (GCVMFVRILQGLVEGVTYPAC). Over 204–221 (HGMWSKWAPPLERSRLAT) the chain is Cytoplasmic. The chain crosses the membrane as a helical span at residues 222 to 242 (TSFCGSYAGAVIAMPLAGILV). Residues 243–249 (QYVGWPS) are Vesicular-facing. Residues 250–270 (VFYIYGVFGIIWYIFWILLAY) form a helical membrane-spanning segment. Over 271-315 (NSPAVHPTISEEERNYIETSIGEGANLMSSTEKFKTPWREFFTSM) the chain is Cytoplasmic. Residues 316–336 (PVYAIIVANFCRSWTFYLLLI) form a helical membrane-spanning segment. Topologically, residues 337–354 (SQPAYFEEVFGFPISKVG) are vesicular. A helical transmembrane segment spans residues 355–375 (ILSAVPHMVMTIIVPIGGQLA). The Cytoplasmic segment spans residues 376 to 391 (DFLRSRKILSTTTVRK). A helical membrane pass occupies residues 392–412 (IMNCGGFGMEATLLLVVGFSH). At 413-414 (TR) the chain is on the vesicular side. Residues 415-435 (AVAISFLILAVGFSGFAISGF) form a helical membrane-spanning segment. Residues 436–448 (NVNHLDIAPRYAS) lie on the Cytoplasmic side of the membrane. The chain crosses the membrane as a helical span at residues 449–469 (ILMGISNGVGTLSGMVCPLIV). The Vesicular portion of the chain corresponds to 470–482 (GALTKHKTRLEWQ). Residues 483-503 (HVFVIASMVHYTGVIFYAIFA) traverse the membrane as a helical segment. At 504 to 587 (SGEKQDWADP…NHYENGEYQT (84 aa)) the chain is on the cytoplasmic side. Over residues 526-535 (EDELADETEP) the composition is skewed to acidic residues. Positions 526–590 (EDELADETEP…ENGEYQTQYQ (65 aa)) are disordered. A compositionally biased stretch (polar residues) spans 536–557 (SSDSGLATRQKTYGTTDNSSGR).

The protein belongs to the major facilitator superfamily. Sodium/anion cotransporter family. VGLUT subfamily.

It localises to the cytoplasmic vesicle. The protein resides in the secretory vesicle. Its subcellular location is the synaptic vesicle membrane. It is found in the cell membrane. The protein localises to the synapse. It localises to the synaptosome. It catalyses the reaction L-glutamate(out) = L-glutamate(in). The enzyme catalyses 3 Na(+)(out) + phosphate(out) = 3 Na(+)(in) + phosphate(in). It carries out the reaction chloride(in) = chloride(out). With respect to regulation, the L-glutamate uniporter activity exhibits a biphasic dependence on chloride concentration. Chloride channel activity is allosterically activated by lumenal H(+) and Cl(-) leading to synaptic vesicles acidification. The glutamate transport activity is allosterically activated by lumenal H(+) and Cl(-), preventing non-vesicular L-glutamate release. Multifunctional transporter that transports L-glutamate as well as multiple ions such as chloride, sodium and phosphate. At the synaptic vesicle membrane, mainly functions as an uniporter that mediates the uptake of L-glutamate into synaptic vesicles at presynaptic nerve terminals of excitatory neural cells. The L-glutamate uniporter activity is electrogenic and is driven by the proton electrochemical gradient, mainly by the electrical gradient established by the vacuolar H(+)-ATPase across the synaptic vesicle membrane. In addition, functions as a chloride channel that allows a chloride permeation through the synaptic vesicle membrane that affects the proton electrochemical gradient and promotes synaptic vesicles acidification. At the plasma membrane, following exocytosis, functions as a symporter of Na(+) and phosphate from the extracellular space to the cytoplasm allowing synaptic phosphate homeostasis regulation. The symporter activity is electrogenic. Moreover, operates synergistically with SLC18A3/VACHT under a constant H(+) gradient, thereby allowing striatal vesicular acetylcholine uptake. This chain is Vesicular glutamate transporter 3, found in Danio rerio (Zebrafish).